The following is a 136-amino-acid chain: Large ribosomal subunit protein eL27B (136 aa).

The protein belongs to the eukaryotic ribosomal protein eL27 family. Component of the large ribosomal subunit (LSU). Mature yeast ribosomes consist of a small (40S) and a large (60S) subunit. The 40S small subunit contains 1 molecule of ribosomal RNA (18S rRNA) and 33 different proteins (encoded by 57 genes). The large 60S subunit contains 3 rRNA molecules (25S, 5.8S and 5S rRNA) and 46 different proteins (encoded by 81 genes).

The protein resides in the cytoplasm. In terms of biological role, component of the ribosome, a large ribonucleoprotein complex responsible for the synthesis of proteins in the cell. The small ribosomal subunit (SSU) binds messenger RNAs (mRNAs) and translates the encoded message by selecting cognate aminoacyl-transfer RNA (tRNA) molecules. The large subunit (LSU) contains the ribosomal catalytic site termed the peptidyl transferase center (PTC), which catalyzes the formation of peptide bonds, thereby polymerizing the amino acids delivered by tRNAs into a polypeptide chain. The nascent polypeptides leave the ribosome through a tunnel in the LSU and interact with protein factors that function in enzymatic processing, targeting, and the membrane insertion of nascent chains at the exit of the ribosomal tunnel. This Saccharomyces cerevisiae (strain ATCC 204508 / S288c) (Baker's yeast) protein is Large ribosomal subunit protein eL27B.